Consider the following 364-residue polypeptide: tRNA 2-selenouridine synthase (364 aa).

The 124-residue stretch at 14–137 folds into the Rhodanese domain; sequence LIADTPIIDV…LRQTAIQATI (124 aa). The active-site S-selanylcysteine intermediate is Cys-97.

The protein belongs to the SelU family. As to quaternary structure, monomer.

The catalysed reaction is 5-methylaminomethyl-2-thiouridine(34) in tRNA + selenophosphate + (2E)-geranyl diphosphate + H2O + H(+) = 5-methylaminomethyl-2-selenouridine(34) in tRNA + (2E)-thiogeraniol + phosphate + diphosphate. It carries out the reaction 5-methylaminomethyl-2-thiouridine(34) in tRNA + (2E)-geranyl diphosphate = 5-methylaminomethyl-S-(2E)-geranyl-thiouridine(34) in tRNA + diphosphate. The enzyme catalyses 5-methylaminomethyl-S-(2E)-geranyl-thiouridine(34) in tRNA + selenophosphate + H(+) = 5-methylaminomethyl-2-(Se-phospho)selenouridine(34) in tRNA + (2E)-thiogeraniol. It catalyses the reaction 5-methylaminomethyl-2-(Se-phospho)selenouridine(34) in tRNA + H2O = 5-methylaminomethyl-2-selenouridine(34) in tRNA + phosphate. Involved in the post-transcriptional modification of the uridine at the wobble position (U34) of tRNA(Lys), tRNA(Glu) and tRNA(Gln). Catalyzes the conversion of 2-thiouridine (S2U-RNA) to 2-selenouridine (Se2U-RNA). Acts in a two-step process involving geranylation of 2-thiouridine (S2U) to S-geranyl-2-thiouridine (geS2U) and subsequent selenation of the latter derivative to 2-selenouridine (Se2U) in the tRNA chain. This is tRNA 2-selenouridine synthase from Escherichia fergusonii (strain ATCC 35469 / DSM 13698 / CCUG 18766 / IAM 14443 / JCM 21226 / LMG 7866 / NBRC 102419 / NCTC 12128 / CDC 0568-73).